Reading from the N-terminus, the 454-residue chain is Transmembrane protease serine 3 (454 aa).

Residues 1 to 48 (MGENDPPAVEAPFSFRSLFGLDDLKISPVAPDADAVAAQILSLLPLKF) lie on the Cytoplasmic side of the membrane. A helical; Signal-anchor for type II membrane protein membrane pass occupies residues 49 to 69 (FPIIVIGIIALILALAIGLGI). Topologically, residues 70-454 (HFDCSGKYRC…HEQMERDLKT (385 aa)) are extracellular. The LDL-receptor class A domain maps to 72-108 (DCSGKYRCRSSFKCIELIARCDGVSDCKDGEDEYRCV). 10 cysteine pairs are disulfide-bonded: Cys-73–Cys-85, Cys-79–Cys-98, Cys-92–Cys-107, Cys-129–Cys-194, Cys-142–Cys-204, Cys-207–Cys-324, Cys-242–Cys-258, Cys-338–Cys-407, Cys-370–Cys-386, and Cys-397–Cys-425. The SRCR domain occupies 109 to 205 (RVGGQNAVLQ…SGHVVTLQCT (97 aa)). Residues 217–449 (IVGGNMSLLS…FLDWIHEQME (233 aa)) form the Peptidase S1 domain. Asn-221 carries an N-linked (GlcNAc...) asparagine glycan. Catalysis depends on charge relay system residues His-257 and Asp-304. Ser-401 acts as the Charge relay system in catalysis.

Belongs to the peptidase S1 family. Post-translationally, undergoes autoproteolytic activation. As to expression, expressed in many tissues including fetal cochlea. Isoform T is found at increased levels in some carcinomas.

Its subcellular location is the endoplasmic reticulum membrane. Its function is as follows. Probable serine protease that plays a role in hearing. Acts as a permissive factor for cochlear hair cell survival and activation at the onset of hearing and is required for saccular hair cell survival. Activates ENaC (in vitro). The chain is Transmembrane protease serine 3 (TMPRSS3) from Homo sapiens (Human).